The following is a 1384-amino-acid chain: ATP-dependent RNA helicase TDRD9 (1384 aa).

The disordered stretch occupies residues E35–V60. Residues A36–E46 show a composition bias toward basic and acidic residues. One can recognise a Helicase ATP-binding domain in the interval I144–N310. G157 to S164 serves as a coordination point for ATP. Residues D256 to H259 carry the DEAH box motif. The region spanning S379–G546 is the Helicase C-terminal domain. The 61-residue stretch at H946–L1006 folds into the Tudor domain.

It belongs to the DEAD box helicase family. DEAH subfamily. In terms of assembly, interacts with piRNA-associated proteins PIWIL1 and PIWIL4.

The protein resides in the cytoplasm. It is found in the nucleus. It carries out the reaction ATP + H2O = ADP + phosphate + H(+). In terms of biological role, ATP-binding RNA helicase which plays a central role during spermatogenesis by repressing transposable elements and preventing their mobilization, which is essential for the germline integrity. Acts via the piRNA metabolic process, which mediates the repression of transposable elements during meiosis by forming complexes composed of piRNAs and Piwi proteins and governs the methylation and subsequent repression of transposons. Acts downstream of piRNA biogenesis: exclusively required for transposon silencing in the nucleus, suggesting that it acts as a nuclear effector in the nucleus together with PIWIL4. This Rattus norvegicus (Rat) protein is ATP-dependent RNA helicase TDRD9.